Here is a 42-residue protein sequence, read N- to C-terminus: Photosystem I reaction center subunit IX (42 aa).

A helical membrane pass occupies residues 7 to 27; the sequence is YLSTAPVLAAVWFGFLAGLLI.

Belongs to the PsaJ family.

Its subcellular location is the plastid. It localises to the chloroplast thylakoid membrane. Functionally, may help in the organization of the PsaE and PsaF subunits. This is Photosystem I reaction center subunit IX from Nephroselmis olivacea (Green alga).